We begin with the raw amino-acid sequence, 54 residues long: MSTATFVDIIIAILLPPLGVFLRFGCGVEFWICLVLTLLGYIPGIIYAIYVLTK.

2 helical membrane passes run 2–22 and 32–52; these read STATFVDIIIAILLPPLGVFL and ICLVLTLLGYIPGIIYAIYVL.

Belongs to the UPF0057 (PMP3) family.

The protein localises to the membrane. The protein is Hydrophobic protein RCI2A (RCI2A) of Arabidopsis thaliana (Mouse-ear cress).